A 142-amino-acid polypeptide reads, in one-letter code: Hemoglobin subunit alpha-1 (142 aa).

N-acetylserine is present on Ser-1. A Globin domain is found at 1–142 (SLSVKDKAAV…VALALAERYR (142 aa)). His-59 contributes to the O2 binding site. His-88 contacts heme b.

This sequence belongs to the globin family. Hb 1 is a heterotetramer of two alpha-1 and two beta-1 chains. In terms of tissue distribution, red blood cells.

In terms of biological role, involved in oxygen transport from gills to the various peripheral tissues. The chain is Hemoglobin subunit alpha-1 (hba1) from Gobionotothen gibberifrons (Humped rockcod).